Consider the following 123-residue polypeptide: MARIVGVEIPSNKKVHIALRYLYGIGPTRAMEICKNTGVDPDKRVKELTEDEISKIASFIQQNYKVEGELRTEVMRNIKRLMDIGCYRGLRHKLGLPVRGQRTRSNARTRKGPRPSRIKKKGK.

The segment at 97-123 (PVRGQRTRSNARTRKGPRPSRIKKKGK) is disordered. The span at 101 to 123 (QRTRSNARTRKGPRPSRIKKKGK) shows a compositional bias: basic residues.

It belongs to the universal ribosomal protein uS13 family. Part of the 30S ribosomal subunit. Forms a loose heterodimer with protein S19. Forms two bridges to the 50S subunit in the 70S ribosome.

Its function is as follows. Located at the top of the head of the 30S subunit, it contacts several helices of the 16S rRNA. In the 70S ribosome it contacts the 23S rRNA (bridge B1a) and protein L5 of the 50S subunit (bridge B1b), connecting the 2 subunits; these bridges are implicated in subunit movement. Contacts the tRNAs in the A and P-sites. This is Small ribosomal subunit protein uS13 from Fervidobacterium nodosum (strain ATCC 35602 / DSM 5306 / Rt17-B1).